Consider the following 458-residue polypeptide: Cysteine--tRNA ligase (458 aa).

Cysteine 27 serves as a coordination point for Zn(2+). The 'HIGH' region motif lies at 29 to 39 (MTVYDYMHIGH). Zn(2+) is bound by residues cysteine 208, histidine 233, and glutamate 237. Residues 265-269 (KMSKS) carry the 'KMSKS' region motif. Lysine 268 serves as a coordination point for ATP.

This sequence belongs to the class-I aminoacyl-tRNA synthetase family. Monomer. It depends on Zn(2+) as a cofactor.

The protein localises to the cytoplasm. The catalysed reaction is tRNA(Cys) + L-cysteine + ATP = L-cysteinyl-tRNA(Cys) + AMP + diphosphate. This chain is Cysteine--tRNA ligase, found in Coxiella burnetii (strain Dugway 5J108-111).